A 334-amino-acid polypeptide reads, in one-letter code: 7,8-didemethyl-8-hydroxy-5-deazariboflavin synthase (334 aa).

A Radical SAM core domain is found at 2-248 (VSYSKNVFVP…PDVPVQVPPN (247 aa)). The [4Fe-4S] cluster site is built by Cys16, Cys20, and Cys23.

This sequence belongs to the radical SAM superfamily. CofG family. In terms of assembly, consists of two subunits, CofG and CofH. [4Fe-4S] cluster serves as cofactor.

The enzyme catalyses 5-amino-5-(4-hydroxybenzyl)-6-(D-ribitylimino)-5,6-dihydrouracil + S-adenosyl-L-methionine = 7,8-didemethyl-8-hydroxy-5-deazariboflavin + 5'-deoxyadenosine + L-methionine + NH4(+) + H(+). The protein operates within cofactor biosynthesis; coenzyme F0 biosynthesis. Functionally, catalyzes the radical-mediated synthesis of 7,8-didemethyl-8-hydroxy-5-deazariboflavin from 5-amino-5-(4-hydroxybenzyl)-6-(D-ribitylimino)-5,6-dihydrouracil. This is 7,8-didemethyl-8-hydroxy-5-deazariboflavin synthase from Methanopyrus kandleri (strain AV19 / DSM 6324 / JCM 9639 / NBRC 100938).